The following is a 424-amino-acid chain: UDP-N-acetylglucosamine 1-carboxyvinyltransferase (424 aa).

Residue 22-23 (KN) participates in phosphoenolpyruvate binding. Position 95 (arginine 95) interacts with UDP-N-acetyl-alpha-D-glucosamine. Catalysis depends on cysteine 119, which acts as the Proton donor. Cysteine 119 is subject to 2-(S-cysteinyl)pyruvic acid O-phosphothioketal. Residues 124 to 128 (RPVDQ), aspartate 311, and isoleucine 333 each bind UDP-N-acetyl-alpha-D-glucosamine.

It belongs to the EPSP synthase family. MurA subfamily.

It is found in the cytoplasm. The enzyme catalyses phosphoenolpyruvate + UDP-N-acetyl-alpha-D-glucosamine = UDP-N-acetyl-3-O-(1-carboxyvinyl)-alpha-D-glucosamine + phosphate. The protein operates within cell wall biogenesis; peptidoglycan biosynthesis. Its function is as follows. Cell wall formation. Adds enolpyruvyl to UDP-N-acetylglucosamine. The polypeptide is UDP-N-acetylglucosamine 1-carboxyvinyltransferase (Polaromonas naphthalenivorans (strain CJ2)).